Reading from the N-terminus, the 463-residue chain is Phosphomannomutase/phosphoglucomutase (463 aa).

Position 17 (Tyr-17) interacts with alpha-D-glucose 1-phosphate. Residue Tyr-17 coordinates alpha-D-mannose 1-phosphate. Ser-108 acts as the Non-phosphorylated intermediate in catalysis. Residues Ser-108, Asp-242, Asp-244, and Asp-246 each coordinate Mg(2+). A Phosphoserine modification is found at Ser-108. Alpha-D-glucose 1-phosphate is bound by residues Lys-285, His-308, 325 to 329 (EMSGH), and 421 to 425 (RASNT). Alpha-D-mannose 1-phosphate-binding positions include His-308, 325–329 (EMSGH), and 421–425 (RASNT).

It belongs to the phosphohexose mutase family. In terms of assembly, monomer. It depends on Mg(2+) as a cofactor.

It catalyses the reaction alpha-D-mannose 1-phosphate = D-mannose 6-phosphate. It carries out the reaction alpha-D-glucose 1-phosphate = alpha-D-glucose 6-phosphate. It participates in nucleotide-sugar biosynthesis; GDP-alpha-D-mannose biosynthesis; alpha-D-mannose 1-phosphate from D-fructose 6-phosphate: step 2/2. Its pathway is bacterial outer membrane biogenesis; lipopolysaccharide biosynthesis. Highly reversible phosphoryltransferase. The phosphomannomutase activity produces a precursor for alginate polymerization, the alginate layer causes a mucoid phenotype and provides a protective barrier against host immune defenses and antibiotics. Also involved in core lipopolysaccaride (LPS) biosynthesis due to its phosphoglucomutase activity. Essential for rhamnolipid production, an exoproduct correlated with pathogenicity. Required for biofilm production. The reaction proceeds via 2 processive phosphoryl transferase reactions; first from enzyme-phospho-Ser-108 to the substrate (generating a bisphosphorylated substrate intermediate and a dephosphorylated enzyme), a 180 degree rotation of the intermediate (probably aided by movement of domain 4), and subsequent transfer of phosphate back to the enzyme. In Pseudomonas aeruginosa (strain UCBPP-PA14), this protein is Phosphomannomutase/phosphoglucomutase (algC).